The sequence spans 101 residues: Small ribosomal subunit protein uS14 (101 aa).

This sequence belongs to the universal ribosomal protein uS14 family. Part of the 30S ribosomal subunit. Contacts proteins S3 and S10.

In terms of biological role, binds 16S rRNA, required for the assembly of 30S particles and may also be responsible for determining the conformation of the 16S rRNA at the A site. This is Small ribosomal subunit protein uS14 from Pseudomonas syringae pv. tomato (strain ATCC BAA-871 / DC3000).